A 102-amino-acid polypeptide reads, in one-letter code: Defensin-like protein 285 (102 aa).

An N-terminal signal peptide occupies residues 1–28 (MTNLYFKTAFLLSLLLLSFSYQSKLIEA). 4 disulfide bridges follow: Cys39/Cys100, Cys64/Cys83, Cys70/Cys88, and Cys75/Cys90.

This sequence belongs to the DEFL family.

The protein resides in the secreted. The sequence is that of Defensin-like protein 285 from Arabidopsis thaliana (Mouse-ear cress).